We begin with the raw amino-acid sequence, 118 residues long: Large ribosomal subunit protein bL20 (118 aa).

The protein belongs to the bacterial ribosomal protein bL20 family.

Functionally, binds directly to 23S ribosomal RNA and is necessary for the in vitro assembly process of the 50S ribosomal subunit. It is not involved in the protein synthesizing functions of that subunit. The sequence is that of Large ribosomal subunit protein bL20 from Staphylococcus epidermidis (strain ATCC 35984 / DSM 28319 / BCRC 17069 / CCUG 31568 / BM 3577 / RP62A).